A 259-amino-acid polypeptide reads, in one-letter code: L-cysteine S-thiosulfotransferase subunit SoxA (259 aa).

The signal sequence occupies residues 1–23 (MRKLWFLPILLGAVGGVSLYAIA). In terms of domain architecture, Cytochrome c spans 50–135 (VYAEQGRDMF…SIATYVATLS (86 aa)). Residues C70, C73, H74, C108, C171, C174, and H175 each coordinate heme c. Residue R216 coordinates substrate. C220 serves as a coordination point for heme c. C220 serves as the catalytic Cysteine persulfide intermediate.

This sequence belongs to the SoxA family. As to quaternary structure, heterodimer of SoxA and SoxX. Heme c is required as a cofactor. In terms of processing, cysteine persulfide at Cys-220.

It is found in the periplasm. The enzyme catalyses L-cysteinyl-[SoxY protein] + thiosulfate + 2 Fe(III)-[cytochrome c] = S-sulfosulfanyl-L-cysteinyl-[SoxY protein] + 2 Fe(II)-[cytochrome c] + 2 H(+). It catalyses the reaction S-sulfanyl-L-cysteinyl-[SoxY protein] + thiosulfate + 2 Fe(III)-[cytochrome c] = S-(2-sulfodisulfanyl)-L-cysteinyl-[SoxY protein] + 2 Fe(II)-[cytochrome c] + 2 H(+). Functionally, C-type diheme cytochrome, which is part of the SoxAX cytochrome complex involved in sulfur oxidation. The SoxAX complex catalyzes the formation of a heterodisulfide bond between the conserved cysteine residue on a sulfur carrier SoxYZ complex subunit SoxY and thiosulfate or other inorganic sulfur substrates. This leads to the liberation of two electrons, which may be transferred from the SoxAX complex to another cytochrome c that then channels them into the respiratory electron transport chain. Some electrons may be used for reductive CO(2) fixation. The chain is L-cysteine S-thiosulfotransferase subunit SoxA from Hydrogenobacter thermophilus (strain DSM 6534 / IAM 12695 / TK-6).